A 452-amino-acid polypeptide reads, in one-letter code: Growth/differentiation factor 6 (452 aa).

The N-terminal stretch at 1-22 is a signal peptide; it reads MDTPRVLLWAIFLISFLWDLPG. A propeptide spanning residues 23–332 is cleaved from the precursor; it reads FQQASISSSS…LPSPGRRRRR (310 aa). Positions 29–93 are disordered; that stretch reads SSSSSTELDS…QEPPGRGPRV (65 aa). Basic and acidic residues-rich tracts occupy residues 37–46 and 58–75; these read DSTKDVENRK and AEGR…ELRR. Asn115 is a glycosylation site (N-linked (GlcNAc...) asparagine). 2 disordered regions span residues 244–267 and 301–348; these read RDSG…LGFG and AEAA…KKSR. Low complexity predominate over residues 301–317; that stretch reads AEAAGAEGSWPAPSGAP. The span at 327 to 348 shows a compositional bias: basic residues; sequence GRRRRRTALSSRHGKRHGKKSR. 3 disulfide bridges follow: Cys351–Cys417, Cys380–Cys449, and Cys384–Cys451.

This sequence belongs to the TGF-beta family. As to quaternary structure, homodimer; disulfide-linked.

The protein localises to the secreted. Functionally, growth factor that controls proliferation and cellular differentiation in the retina and bone formation. Plays a key role in regulating apoptosis during retinal development. Establishes dorsal-ventral positional information in the retina and controls the formation of the retinotectal map. Required for normal formation of bones and joints in the limbs, skull, digits and axial skeleton. Plays a key role in establishing boundaries between skeletal elements during development. Regulation of GDF6 expression seems to be a mechanism for evolving species-specific changes in skeletal structures. Seems to positively regulate differentiation of chondrogenic tissue through the growth factor receptors subunits BMPR1A, BMPR1B, BMPR2 and ACVR2A, leading to the activation of SMAD1-SMAD5-SMAD8 complex. The regulation of chondrogenic differentiation is inhibited by NOG. Also involved in the induction of adipogenesis from mesenchymal stem cells. This mechanism acts through the growth factor receptors subunits BMPR1A, BMPR2 and ACVR2A and the activation of SMAD1-SMAD5-SMAD8 complex and MAPK14/p38. The chain is Growth/differentiation factor 6 (Gdf6) from Rattus norvegicus (Rat).